Consider the following 209-residue polypeptide: Nucleoside triphosphate pyrophosphatase (209 aa).

Asp-79 acts as the Proton acceptor in catalysis.

Belongs to the Maf family. Requires a divalent metal cation as cofactor.

It localises to the cytoplasm. It catalyses the reaction a ribonucleoside 5'-triphosphate + H2O = a ribonucleoside 5'-phosphate + diphosphate + H(+). The catalysed reaction is a 2'-deoxyribonucleoside 5'-triphosphate + H2O = a 2'-deoxyribonucleoside 5'-phosphate + diphosphate + H(+). Its function is as follows. Nucleoside triphosphate pyrophosphatase. May have a dual role in cell division arrest and in preventing the incorporation of modified nucleotides into cellular nucleic acids. The chain is Nucleoside triphosphate pyrophosphatase from Mycolicibacterium gilvum (strain PYR-GCK) (Mycobacterium gilvum (strain PYR-GCK)).